The primary structure comprises 418 residues: Serine/threonine transporter SstT (418 aa).

Transmembrane regions (helical) follow at residues 21–41 (ILIG…AAIA), 49–69 (FVGA…IASI), 83–103 (ILFL…VVSF), 142–162 (ALLN…GIAL), 190–210 (FAPL…GFGA), 217–237 (LLVV…PLIV), 299–319 (MAGA…TLGI), and 331–351 (VVAA…LLLI).

The protein belongs to the dicarboxylate/amino acid:cation symporter (DAACS) (TC 2.A.23) family.

The protein resides in the cell inner membrane. It catalyses the reaction L-serine(in) + Na(+)(in) = L-serine(out) + Na(+)(out). The catalysed reaction is L-threonine(in) + Na(+)(in) = L-threonine(out) + Na(+)(out). Involved in the import of serine and threonine into the cell, with the concomitant import of sodium (symport system). The sequence is that of Serine/threonine transporter SstT from Yersinia pseudotuberculosis serotype O:1b (strain IP 31758).